Consider the following 131-residue polypeptide: Large ribosomal subunit protein bL17 (131 aa).

It belongs to the bacterial ribosomal protein bL17 family. In terms of assembly, part of the 50S ribosomal subunit. Contacts protein L32.

The chain is Large ribosomal subunit protein bL17 from Chromobacterium violaceum (strain ATCC 12472 / DSM 30191 / JCM 1249 / CCUG 213 / NBRC 12614 / NCIMB 9131 / NCTC 9757 / MK).